Here is a 232-residue protein sequence, read N- to C-terminus: Phosphoribosylformylglycinamidine synthase subunit PurQ (232 aa).

In terms of domain architecture, Glutamine amidotransferase type-1 spans 2–232 (KIAILQFGGT…SMVDYITENF (231 aa)). Cysteine 86 (nucleophile) is an active-site residue. Residues histidine 203 and glutamate 205 contribute to the active site.

In terms of assembly, part of the FGAM synthase complex composed of 1 PurL, 1 PurQ and 2 PurS subunits.

It localises to the cytoplasm. The catalysed reaction is N(2)-formyl-N(1)-(5-phospho-beta-D-ribosyl)glycinamide + L-glutamine + ATP + H2O = 2-formamido-N(1)-(5-O-phospho-beta-D-ribosyl)acetamidine + L-glutamate + ADP + phosphate + H(+). The enzyme catalyses L-glutamine + H2O = L-glutamate + NH4(+). It participates in purine metabolism; IMP biosynthesis via de novo pathway; 5-amino-1-(5-phospho-D-ribosyl)imidazole from N(2)-formyl-N(1)-(5-phospho-D-ribosyl)glycinamide: step 1/2. Part of the phosphoribosylformylglycinamidine synthase complex involved in the purines biosynthetic pathway. Catalyzes the ATP-dependent conversion of formylglycinamide ribonucleotide (FGAR) and glutamine to yield formylglycinamidine ribonucleotide (FGAM) and glutamate. The FGAM synthase complex is composed of three subunits. PurQ produces an ammonia molecule by converting glutamine to glutamate. PurL transfers the ammonia molecule to FGAR to form FGAM in an ATP-dependent manner. PurS interacts with PurQ and PurL and is thought to assist in the transfer of the ammonia molecule from PurQ to PurL. The protein is Phosphoribosylformylglycinamidine synthase subunit PurQ of Methanosarcina barkeri (strain Fusaro / DSM 804).